Consider the following 61-residue polypeptide: MAVPKRKTSPSRRGMRRSADALKQPTYVEDKDSGELRRPHHLDLKTGMYRGRQILKPKAEA.

Residues 1 to 16 (MAVPKRKTSPSRRGMR) are compositionally biased toward basic residues. The interval 1–61 (MAVPKRKTSP…RQILKPKAEA (61 aa)) is disordered. The segment covering 28–44 (VEDKDSGELRRPHHLDL) has biased composition (basic and acidic residues).

The protein belongs to the bacterial ribosomal protein bL32 family.

This is Large ribosomal subunit protein bL32 from Xanthobacter autotrophicus (strain ATCC BAA-1158 / Py2).